Consider the following 3184-residue polypeptide: Probable serine/threonine-protein kinase pats1 (3184 aa).

Pro residues predominate over residues 369-378 (DPPPPPPSNS). 2 disordered regions span residues 369–516 (DPPP…QIPP) and 913–1013 (SITR…TSIL). The span at 379–415 (SPPISKSTSNNNLNVSNYHNNNNNNNNSNSNLSNSGN) shows a compositional bias: low complexity. The span at 421-450 (DFQSQNLVKSYNRENSGNSLNSMLHQTSLP) shows a compositional bias: polar residues. Residues 451–512 (NNNNSNVVNN…NNNNSNNNNS (62 aa)) are compositionally biased toward low complexity. A Myotubularin phosphatase domain is found at 842–1348 (CFPDHSLLQE…FQDTMWNEYF (507 aa)). Residues 913–934 (SITRATSPEDQNNGSSNYLLTP) show a composition bias toward polar residues. The span at 935-993 (NSPNSSSSNLANNNNSNNNNINNNNNNNNNNNNNNNNNSNNNNNNNNNNNNNNNNNNNN) shows a compositional bias: low complexity. Residues 1000–1013 (SRSTTIDNGQTSIL) show a composition bias toward polar residues. LRR repeat units lie at residues 1391-1412 (FLET…STLY), 1416-1438 (GLRE…SSLV), 1439-1460 (KLEK…TVVL), 1467-1488 (SLTE…FSMF), 1491-1512 (SLKK…LGML), 1514-1535 (NLIE…GVGI), 1541-1563 (KLCI…GDLK), 1564-1585 (SLEK…FRQL), 1587-1608 (NLEE…VCFL), 1610-1631 (NLKK…ISQL), 1633-1654 (KLMI…IGQL), 1656-1678 (QLVS…MGLL), and 1680-1701 (NLVE…IVSL). The Roc domain occupies 1716-1910 (GQEQCYKMKL…EKLEALVQSQ (195 aa)). The segment at 1716-1910 (GQEQCYKMKL…EKLEALVQSQ (195 aa)) is small GTPase-like. Residues 1729-1736 (GQENVGKT), 1797-1801 (DFAGQ), and 1854-1857 (THLD) each bind GTP. The 210-residue stretch at 1918 to 2127 (PRSYMLLENL…KCYWKNGMIL (210 aa)) folds into the COR domain. Residues 2247 to 2519 (LMIEELIGEG…RLIKIAEAMF (273 aa)) form the Protein kinase domain. ATP is bound by residues 2253 to 2261 (IGEGGAALV) and Lys2274. Residue Asp2379 is the Proton acceptor of the active site. Disordered stretches follow at residues 2528-2609 (YQQQ…TISH) and 2652-2671 (NSIN…NSLL). Residues 2529-2555 (QQQQQQQQQQQQSSPSKSSSTSPIIKS) show a composition bias toward low complexity. Residues 2556–2576 (LNLSTVSELGESSNQTPKQNI) show a composition bias toward polar residues. WD repeat units lie at residues 2745–2785 (PNQG…KYIQ), 2790–2829 (ANKD…KIKS), 2909–2947 (AHER…HTIE), 2949–2986 (AHSS…LVSE), and 2990–3040 (KHKD…NSRS). Residues 3055 to 3126 (GSSNSITNSN…NYYYSNNVNS (72 aa)) are compositionally biased toward low complexity. The disordered stretch occupies residues 3055-3164 (GSSNSITNSN…TPPGSKGLMQ (110 aa)). Residues 3141-3157 (HEQTSPNSATPLSSTPP) are compositionally biased toward polar residues.

This sequence belongs to the protein kinase superfamily. TKL Ser/Thr protein kinase family. ROCO subfamily.

It carries out the reaction L-seryl-[protein] + ATP = O-phospho-L-seryl-[protein] + ADP + H(+). It catalyses the reaction L-threonyl-[protein] + ATP = O-phospho-L-threonyl-[protein] + ADP + H(+). In terms of biological role, may act as a serine/threonine-protein kinase and guanine-nucleotide releasing factor. Essential regulator of cytokinesis involved in the binding to actomyosin cytoskeleton. This chain is Probable serine/threonine-protein kinase pats1 (pats1), found in Dictyostelium discoideum (Social amoeba).